A 154-amino-acid polypeptide reads, in one-letter code: Myoglobin (154 aa).

The 147-residue stretch at 2–148 (GLSDGEWQLV…FRNDMAAKYK (147 aa)) folds into the Globin domain. Residue S4 is modified to Phosphoserine. H65 is a nitrite binding site. An O2-binding site is contributed by H65. Position 68 is a phosphothreonine (T68). Residue H94 participates in heme b binding.

Belongs to the globin family. In terms of assembly, monomeric.

It is found in the cytoplasm. The protein localises to the sarcoplasm. The catalysed reaction is Fe(III)-heme b-[protein] + nitric oxide + H2O = Fe(II)-heme b-[protein] + nitrite + 2 H(+). It catalyses the reaction H2O2 + AH2 = A + 2 H2O. Its function is as follows. Monomeric heme protein which primary function is to store oxygen and facilitate its diffusion within muscle tissues. Reversibly binds oxygen through a pentacoordinated heme iron and enables its timely and efficient release as needed during periods of heightened demand. Depending on the oxidative conditions of tissues and cells, and in addition to its ability to bind oxygen, it also has a nitrite reductase activity whereby it regulates the production of bioactive nitric oxide. Under stress conditions, like hypoxia and anoxia, it also protects cells against reactive oxygen species thanks to its pseudoperoxidase activity. This chain is Myoglobin (MB), found in Sapajus apella (Brown-capped capuchin).